The following is an 883-amino-acid chain: Putative GTP diphosphokinase RSH1, chloroplastic (883 aa).

The transit peptide at 1 to 55 (MTSASSMSVSVECVNICNLTKGDGNARSDCSALSCAWKAPRALTGFLASTAHPPV) directs the protein to the chloroplast. One can recognise an HD domain in the interval 172-279 (FIIHPVAVAR…VKLADRLHNM (108 aa)). In terms of domain architecture, TGS spans 562–625 (LGSRVFVFTP…ENAEVVEIVT (64 aa)). Residues 710–726 (QSQDKSRDTTPAPQNGS) are compositionally biased toward polar residues. Residues 710-746 (QSQDKSRDTTPAPQNGSVWAPKVNGKHNKAIKNSSSD) are disordered. The region spanning 796–867 (WLCVVSMDRK…LVLGVLGWSS (72 aa)) is the ACT domain.

It belongs to the RelA/SpoT family. Interacts with RPP5.

The protein resides in the plastid. Its subcellular location is the chloroplast. The catalysed reaction is GTP + ATP = guanosine 3'-diphosphate 5'-triphosphate + AMP. May be involved in a rapid plant ppGpp (guanosine 3'-diphosphate 5'-diphosphate)-mediated response to pathogens and other stresses. This is Putative GTP diphosphokinase RSH1, chloroplastic (RSH1) from Arabidopsis thaliana (Mouse-ear cress).